The chain runs to 154 residues: Transcriptional repressor NrdR (154 aa).

The segment at 3-34 (CPYCRHPDSRVVDSREADDGQLIRRRRSCPEC) is a zinc-finger region. An ATP-cone domain is found at 46-136 (LAVVKRSGVT…VYRSFESLAD (91 aa)).

Belongs to the NrdR family. It depends on Zn(2+) as a cofactor.

Its function is as follows. Negatively regulates transcription of bacterial ribonucleotide reductase nrd genes and operons by binding to NrdR-boxes. The sequence is that of Transcriptional repressor NrdR from Salinispora arenicola (strain CNS-205).